The primary structure comprises 506 residues: Lysine--tRNA ligase (506 aa).

Residues Glu-416 and Glu-423 each contribute to the Mg(2+) site.

It belongs to the class-II aminoacyl-tRNA synthetase family. As to quaternary structure, homodimer. Mg(2+) serves as cofactor.

The protein localises to the cytoplasm. It catalyses the reaction tRNA(Lys) + L-lysine + ATP = L-lysyl-tRNA(Lys) + AMP + diphosphate. The protein is Lysine--tRNA ligase of Bordetella bronchiseptica (strain ATCC BAA-588 / NCTC 13252 / RB50) (Alcaligenes bronchisepticus).